The sequence spans 443 residues: Mitochondrial enolase superfamily member 1 (443 aa).

Substrate is bound by residues 24-26 (GAD) and Tyr-34. Ser-148 is modified (phosphoserine). Lys-220 lines the substrate pocket. The Proton donor/acceptor role is filled by Lys-222. Residue Asp-250 participates in Mg(2+) binding. Substrate-binding positions include Asn-252, Glu-276, Glu-305, 355–357 (HAG), and Glu-386. Positions 276 and 305 each coordinate Mg(2+). Residue His-355 is part of the active site.

Belongs to the mandelate racemase/muconate lactonizing enzyme family. ENOSF1 subfamily. Mg(2+) serves as cofactor. Post-translationally, could be sumoylated.

It is found in the mitochondrion. It carries out the reaction L-fuconate = 2-dehydro-3-deoxy-L-fuconate + H2O. Functionally, plays a role in the catabolism of L-fucose, a sugar that is part of the carbohydrates that are attached to cellular glycoproteins. Catalyzes the dehydration of L-fuconate to 2-keto-3-deoxy-L-fuconate by the abstraction of the 2-proton to generate an enediolate intermediate that is stabilized by the magnesium ion. This chain is Mitochondrial enolase superfamily member 1 (ENOSF1), found in Homo sapiens (Human).